An 842-amino-acid polypeptide reads, in one-letter code: Elongation factor 2 (842 aa).

In terms of domain architecture, tr-type G spans 17 to 253; the sequence is TNVRNMSVIA…LWGDSYFNPK (237 aa). GTP-binding positions include 26 to 33, 158 to 161, and 213 to 215; these read AHVDHGKS, NKVD, and SGL. Residue His699 is modified to Diphthamide.

This sequence belongs to the TRAFAC class translation factor GTPase superfamily. Classic translation factor GTPase family. EF-G/EF-2 subfamily.

It localises to the cytoplasm. The enzyme catalyses GTP + H2O = GDP + phosphate + H(+). Functionally, catalyzes the GTP-dependent ribosomal translocation step during translation elongation. During this step, the ribosome changes from the pre-translocational (PRE) to the post-translocational (POST) state as the newly formed A-site-bound peptidyl-tRNA and P-site-bound deacylated tRNA move to the P and E sites, respectively. Catalyzes the coordinated movement of the two tRNA molecules, the mRNA and conformational changes in the ribosome. In Naumovozyma castellii (Yeast), this protein is Elongation factor 2 (EFT1).